Reading from the N-terminus, the 105-residue chain is Large ribosomal subunit protein eL36 (105 aa).

This sequence belongs to the eukaryotic ribosomal protein eL36 family. As to quaternary structure, component of the large ribosomal subunit.

It is found in the cytoplasm. Its subcellular location is the cytosol. Functionally, component of the large ribosomal subunit. The ribosome is a large ribonucleoprotein complex responsible for the synthesis of proteins in the cell. This Xenopus laevis (African clawed frog) protein is Large ribosomal subunit protein eL36 (rpl36).